Reading from the N-terminus, the 238-residue chain is Ribonuclease PH (238 aa).

Phosphate is bound by residues arginine 86 and 124–126 (GTR).

The protein belongs to the RNase PH family. In terms of assembly, homohexameric ring arranged as a trimer of dimers.

The enzyme catalyses tRNA(n+1) + phosphate = tRNA(n) + a ribonucleoside 5'-diphosphate. Phosphorolytic 3'-5' exoribonuclease that plays an important role in tRNA 3'-end maturation. Removes nucleotide residues following the 3'-CCA terminus of tRNAs; can also add nucleotides to the ends of RNA molecules by using nucleoside diphosphates as substrates, but this may not be physiologically important. Probably plays a role in initiation of 16S rRNA degradation (leading to ribosome degradation) during starvation. In Pectobacterium atrosepticum (strain SCRI 1043 / ATCC BAA-672) (Erwinia carotovora subsp. atroseptica), this protein is Ribonuclease PH.